The sequence spans 704 residues: Elongation factor G (704 aa).

Residues alanine 8–valine 290 form the tr-type G domain. Residues alanine 17 to threonine 24, aspartate 88 to histidine 92, and asparagine 142 to aspartate 145 each bind GTP. An N6-acetyllysine mark is found at lysine 504 and lysine 643.

The protein belongs to the TRAFAC class translation factor GTPase superfamily. Classic translation factor GTPase family. EF-G/EF-2 subfamily.

The protein resides in the cytoplasm. In terms of biological role, catalyzes the GTP-dependent ribosomal translocation step during translation elongation. During this step, the ribosome changes from the pre-translocational (PRE) to the post-translocational (POST) state as the newly formed A-site-bound peptidyl-tRNA and P-site-bound deacylated tRNA move to the P and E sites, respectively. Catalyzes the coordinated movement of the two tRNA molecules, the mRNA and conformational changes in the ribosome. The polypeptide is Elongation factor G (Shigella flexneri).